The chain runs to 433 residues: MSLMTKLGFRALVASCLIAAGGAAHAQVNVLITGVGSTQFPIATANFVNEASLPQQVTSIVRADLARSGKFTNVDAGGTPVPETASVDFGAWKAKGANAFVAGSVSREPNGQYKVNFILYDTVKQQSLGGLSLTTSNDNEGMRKTGHKIADYIYQKLLGVRGVFNTRLSYVQRTGNVYKLLISDSDGQNAIPALTSKEPIISPAWSPSGTKVAYVSFELRKPVVYIHDLPTGRRYVISNQKGNNSAPAWSPDGQTLAVALSLTGNTQIYSVSSTGSGLHRLTRSSSIDTEPFYSPDGKWIYFTSDRGGAPQIYRMPAGGESAGAAQRVTFTGSYNTSPRISPDGKLLAYISRTGGGFKLYVQDLQTGAANAVTNTTRDESPSFAANGQYILYATQSGGRSVLAAVPSDGSAPPQILSVQGGAIREPSWGPFMQ.

The first 26 residues, 1–26 (MSLMTKLGFRALVASCLIAAGGAAHA), serve as a signal peptide directing secretion.

Belongs to the TolB family. The Tol-Pal system is composed of five core proteins: the inner membrane proteins TolA, TolQ and TolR, the periplasmic protein TolB and the outer membrane protein Pal. They form a network linking the inner and outer membranes and the peptidoglycan layer.

The protein resides in the periplasm. Part of the Tol-Pal system, which plays a role in outer membrane invagination during cell division and is important for maintaining outer membrane integrity. This is Tol-Pal system protein TolB from Burkholderia thailandensis (strain ATCC 700388 / DSM 13276 / CCUG 48851 / CIP 106301 / E264).